Reading from the N-terminus, the 441-residue chain is Proline--tRNA ligase (441 aa).

Belongs to the class-II aminoacyl-tRNA synthetase family. ProS type 2 subfamily. Homodimer.

The protein resides in the cytoplasm. It carries out the reaction tRNA(Pro) + L-proline + ATP = L-prolyl-tRNA(Pro) + AMP + diphosphate. In terms of biological role, catalyzes the attachment of proline to tRNA(Pro) in a two-step reaction: proline is first activated by ATP to form Pro-AMP and then transferred to the acceptor end of tRNA(Pro). This Bartonella henselae (strain ATCC 49882 / DSM 28221 / CCUG 30454 / Houston 1) (Rochalimaea henselae) protein is Proline--tRNA ligase.